A 479-amino-acid chain; its full sequence is Ribosomal RNA small subunit methyltransferase F (479 aa).

Residues Ala-125–Lys-131, Glu-149, Asp-176, and Asp-194 each bind S-adenosyl-L-methionine. Residue Cys-247 is the Nucleophile of the active site.

The protein belongs to the class I-like SAM-binding methyltransferase superfamily. RsmB/NOP family.

It localises to the cytoplasm. The enzyme catalyses cytidine(1407) in 16S rRNA + S-adenosyl-L-methionine = 5-methylcytidine(1407) in 16S rRNA + S-adenosyl-L-homocysteine + H(+). In terms of biological role, specifically methylates the cytosine at position 1407 (m5C1407) of 16S rRNA. The protein is Ribosomal RNA small subunit methyltransferase F of Escherichia coli O17:K52:H18 (strain UMN026 / ExPEC).